Reading from the N-terminus, the 473-residue chain is Chromosomal replication initiator protein DnaA (473 aa).

The tract at residues 1 to 73 (MTNIEQDRWS…LSCWQAEMPQ (73 aa)) is domain I, interacts with DnaA modulators. Residues 73 to 129 (QVHRVDLTVRTAMRCAAPAKDAPAHAEPRRDDGRPAPELRATAIAPVSATHEALGGS) are domain II. The tract at residues 130–352 (PLDPRLTFGS…GAINRLLAHS (223 aa)) is domain III, AAA+ region. ATP contacts are provided by glycine 177, glycine 179, lysine 180, and threonine 181. Residues 353-473 (KLNAQPVTLE…VELLKRQLQE (121 aa)) form a domain IV, binds dsDNA region.

Belongs to the DnaA family. Oligomerizes as a right-handed, spiral filament on DNA at oriC.

Its subcellular location is the cytoplasm. Plays an essential role in the initiation and regulation of chromosomal replication. ATP-DnaA binds to the origin of replication (oriC) to initiate formation of the DNA replication initiation complex once per cell cycle. Binds the DnaA box (a 9 base pair repeat at the origin) and separates the double-stranded (ds)DNA. Forms a right-handed helical filament on oriC DNA; dsDNA binds to the exterior of the filament while single-stranded (ss)DNA is stabiized in the filament's interior. The ATP-DnaA-oriC complex binds and stabilizes one strand of the AT-rich DNA unwinding element (DUE), permitting loading of DNA polymerase. After initiation quickly degrades to an ADP-DnaA complex that is not apt for DNA replication. Binds acidic phospholipids. The protein is Chromosomal replication initiator protein DnaA of Rhodopseudomonas palustris (strain BisB18).